A 300-amino-acid chain; its full sequence is NAD kinase (300 aa).

Catalysis depends on D75, which acts as the Proton acceptor. Residues 75-76 (DG), 149-150 (ND), R177, D179, 190-195 (TAYALS), A214, and Q248 each bind NAD(+).

The protein belongs to the NAD kinase family. A divalent metal cation serves as cofactor.

It is found in the cytoplasm. It carries out the reaction NAD(+) + ATP = ADP + NADP(+) + H(+). Functionally, involved in the regulation of the intracellular balance of NAD and NADP, and is a key enzyme in the biosynthesis of NADP. Catalyzes specifically the phosphorylation on 2'-hydroxyl of the adenosine moiety of NAD to yield NADP. This Burkholderia cenocepacia (strain HI2424) protein is NAD kinase.